We begin with the raw amino-acid sequence, 482 residues long: uncharacterized protein (482 aa).

One can recognise a DWNN domain in the interval 5–79; that stretch reads IYYKFKSQKD…STSVIVRRVP (75 aa). Residues 86-108 form a disordered region; the sequence is GTAARYVSGAPKTTGARSDSVKR. Residues 183–200 form a CCHC-type zinc finger; it reads YICYRCGQKGHWIQACPT. The segment at 282–322 adopts an RING-type; degenerate zinc-finger fold; it reads CTLCKKLARNACRTPCCDKLFCEECIQTALLDSDFECPNCH. Disordered regions lie at residues 346–393 and 447–482; these read KSVL…SSAV and QVYH…TKTN. Over residues 451–466 the composition is skewed to low complexity; sequence NNRNPPRTNSRPSNAS.

Its subcellular location is the nucleus. This is an uncharacterized protein from Schizosaccharomyces pombe (strain 972 / ATCC 24843) (Fission yeast).